We begin with the raw amino-acid sequence, 383 residues long: 8-amino-7-oxononanoate synthase (383 aa).

R21 is a binding site for substrate. 108–109 (GY) serves as a coordination point for pyridoxal 5'-phosphate. H133 is a substrate binding site. Residues S179, H207, and T233 each contribute to the pyridoxal 5'-phosphate site. K236 carries the N6-(pyridoxal phosphate)lysine modification. T350 is a substrate binding site.

The protein belongs to the class-II pyridoxal-phosphate-dependent aminotransferase family. BioF subfamily. Homodimer. Requires pyridoxal 5'-phosphate as cofactor.

It catalyses the reaction 6-carboxyhexanoyl-[ACP] + L-alanine + H(+) = (8S)-8-amino-7-oxononanoate + holo-[ACP] + CO2. It functions in the pathway cofactor biosynthesis; biotin biosynthesis. In terms of biological role, catalyzes the decarboxylative condensation of pimeloyl-[acyl-carrier protein] and L-alanine to produce 8-amino-7-oxononanoate (AON), [acyl-carrier protein], and carbon dioxide. This chain is 8-amino-7-oxononanoate synthase, found in Serratia proteamaculans (strain 568).